The primary structure comprises 445 residues: MKQRQFFGTDGIRGKVGAGKMTPELALKLGWAAGRVLSRSGTQKVIIGKDTRISGYLFESALEAGLSAAGLDVMLIGPMPTPAVAYLTRTFRAEAGIVISASHNPYYDNGIKFFANDGSKLDDEVELEIEAELEKPLTCVESHLLGKVNRIDDAAGRYIEYCKSHFPAEQTLSGLKIVVDCAHGATYHIAPSVFRELGAEVIAIGDKPNGLNINDKVGATSMGQICETVLAENADLGIALDGDGDRIMMVNRHGRVIDGDEILYILACDAQKRGVLRGGVVGTLMSNLGLDLALQALEIPFVRSKVGDRYVMELLKEHDWRIGGENSGHILNLDHGTTGDGIVAGILVLAAMQRQNASLEALTANITMLPQVLVNVRFEGDNDPLASEVVLAAQAEVEQKLGARGRVLLRKSGTEPLLRVMVEGDEQEAVTEYANYIADAVRNLV.

The active-site Phosphoserine intermediate is the S102. Positions 102, 241, 243, and 245 each coordinate Mg(2+). S102 carries the phosphoserine modification.

It belongs to the phosphohexose mutase family. Mg(2+) serves as cofactor. In terms of processing, activated by phosphorylation.

It carries out the reaction alpha-D-glucosamine 1-phosphate = D-glucosamine 6-phosphate. Catalyzes the conversion of glucosamine-6-phosphate to glucosamine-1-phosphate. This Shewanella pealeana (strain ATCC 700345 / ANG-SQ1) protein is Phosphoglucosamine mutase.